We begin with the raw amino-acid sequence, 354 residues long: Galactoside alpha-(1,2)-fucosyltransferase 2 (354 aa).

At 1-22 (MRFAPDYVLCPPTATRRLRATH) the chain is on the cytoplasmic side. A helical; Signal-anchor for type II membrane protein membrane pass occupies residues 23–43 (PSVSTIYFLFTIFVVSTVFHC). Residues 44 to 354 (HQRLALVPAP…NMGRALWSGL (311 aa)) are Lumenal-facing. N-linked (GlcNAc...) asparagine glycosylation is found at asparagine 197, asparagine 291, and asparagine 317.

It belongs to the glycosyltransferase 11 family. As to expression, salivary and lactating mammary glands.

The protein resides in the golgi apparatus. It is found in the golgi stack membrane. The enzyme catalyses a beta-D-galactosyl-(1-&gt;3)-N-acetyl-beta-D-glucosaminyl derivative + GDP-beta-L-fucose = an alpha-L-Fuc-(1-&gt;2)-beta-D-Gal-(1-&gt;3)-beta-D-GlcNAc derivative + GDP + H(+). It catalyses the reaction a beta-D-galactosyl-(1-&gt;4)-N-acetyl-beta-D-glucosaminyl derivative + GDP-beta-L-fucose = an alpha-L-Fuc-(1-&gt;2)-beta-D-Gal-(1-&gt;4)-beta-D-GlcNAc derivative + GDP + H(+). The catalysed reaction is a neolactoside nLc4Cer + GDP-beta-L-fucose = a neolactoside IV(2)-alpha-Fuc-nLc4Cer + GDP + H(+). It carries out the reaction a neolactoside nLc4Cer(d18:1(4E)) + GDP-beta-L-fucose = a neolactoside IV(2)-alpha-Fuc-nLc4Cer(d18:1(4E)) + GDP + H(+). The enzyme catalyses a ganglioside GM1 + GDP-beta-L-fucose = a ganglioside Fuc-GM1 + GDP + H(+). It catalyses the reaction a ganglioside GA1 + GDP-beta-L-fucose = a ganglioside Fuc-GA1 + GDP + H(+). The catalysed reaction is Lc4Cer + GDP-beta-L-fucose = alpha-L-fucosyl-(1-&gt;2)-beta-D-galactosyl-(1-&gt;3)-N-acetyl-beta-D-glucosaminyl-(1-&gt;3)-beta-D-galactosyl-(1-&gt;4)-beta-D-glucosyl-(1&lt;-&gt;1')-ceramide + GDP + H(+). It carries out the reaction a beta-D-Gal-(1-&gt;3)-beta-D-GlcNAc-(1-&gt;3)-beta-D-Gal-(1-&gt;4)-beta-D-Glc-(1&lt;-&gt;1')-Cer(d18:1(4E)) + GDP-beta-L-fucose = alpha-L-fucosyl-(1-&gt;2)- beta-D-galactosyl-(1-&gt;3)-N-acetyl-beta-D-glucosaminyl-(1-&gt;3)-beta-D-galactosyl-(1-&gt;4)-beta-D-glucosyl-(1&lt;-&gt;1')-N-acylsphing-4-enine + GDP + H(+). The enzyme catalyses a ganglioside GD1b + GDP-beta-L-fucose = a ganglioside Fuc-GD1b + GDP + H(+). It catalyses the reaction a ganglioside GM1 (d18:1(4E)) + GDP-beta-L-fucose = a ganglioside Fuc-GM1 (d18:1(4E)) + GDP + H(+). The catalysed reaction is a globoside GalGb4Cer (d18:1(4E)) + GDP-beta-L-fucose = a globoside Globo-H (d18:1(4E)) + GDP + H(+). It carries out the reaction a lactoside III(4)-a-Fuc-Lc4Cer + GDP-beta-L-fucose = a lactoside IV(2),III(4)-a-[Fuc]2-Lc4Cer + GDP + H(+). The enzyme catalyses beta-D-galactosyl-(1-&gt;3)-N-acetyl-D-galactosamine + GDP-beta-L-fucose = alpha-L-fucosyl-(1-&gt;2)-beta-D-galactosyl-(1-&gt;3)-N-acetyl-D-galactosamine + GDP + H(+). It participates in protein modification; protein glycosylation. Catalyzes the transfer of L-fucose, from a guanosine diphosphate-beta-L-fucose, to the terminal galactose on both O- and N-linked glycans chains of cell surface glycoproteins and glycolipids and the resulting epitope regulates several processes such as cell-cell interaction including host-microbe interaction, cell surface expression and cell proliferation. Preferentially fucosylates gangliosides GA1 and GM1 in the antrum, cecum and colon and in the female reproductive organs. Fucosylated host glycoproteins or glycolipids mediate interaction with intestinal microbiota influencing its composition. Creates a soluble precursor oligosaccharide FuC-alpha ((1,2)Galbeta-) called the H antigen which is an essential substrate for the final step in the soluble ABO blood group antigen synthesis pathway. The sequence is that of Galactoside alpha-(1,2)-fucosyltransferase 2 from Oryctolagus cuniculus (Rabbit).